We begin with the raw amino-acid sequence, 423 residues long: Serine hydroxymethyltransferase (423 aa).

121 to 123 (GHI) is a (6S)-5,6,7,8-tetrahydrofolate binding site. K227 is modified (N6-(pyridoxal phosphate)lysine). E242 is a binding site for (6S)-5,6,7,8-tetrahydrofolate.

This sequence belongs to the SHMT family. In terms of assembly, homodimer. The cofactor is pyridoxal 5'-phosphate.

It localises to the cytoplasm. It carries out the reaction 5,10-methylenetetrahydromethanopterin + glycine + H2O = 5,6,7,8-tetrahydromethanopterin + L-serine. It participates in amino-acid biosynthesis; glycine biosynthesis; glycine from L-serine: step 1/1. Catalyzes the reversible interconversion of serine and glycine with tetrahydromethanopterin (H4MPT) serving as the one-carbon carrier. Also exhibits a pteridine-independent aldolase activity toward beta-hydroxyamino acids, producing glycine and aldehydes, via a retro-aldol mechanism. In Methanothermobacter marburgensis (strain ATCC BAA-927 / DSM 2133 / JCM 14651 / NBRC 100331 / OCM 82 / Marburg) (Methanobacterium thermoautotrophicum), this protein is Serine hydroxymethyltransferase.